The sequence spans 215 residues: Histone-like protein 18C (215 aa).

The tract at residues 140 to 215 is disordered; the sequence is CTPRKENKCS…PKSSKPKCSM (76 aa). Basic residues-rich tracts occupy residues 149–190 and 197–215; these read SKPR…RPRK and AKAK…KCSM.

Its function is as follows. Not known. Encoded in the intron of cAMP-dependent protein kinase regulatory chain type I. The protein is Histone-like protein 18C (Mst77F) of Drosophila melanogaster (Fruit fly).